The chain runs to 339 residues: Glucokinase (339 aa).

16–21 is an ATP binding site; it reads GDIGGT.

This sequence belongs to the bacterial glucokinase family.

It is found in the cytoplasm. It carries out the reaction D-glucose + ATP = D-glucose 6-phosphate + ADP + H(+). In Sinorhizobium fredii (strain NBRC 101917 / NGR234), this protein is Glucokinase.